Consider the following 149-residue polypeptide: MSDNNQALKDAGLKVTLPRLKILEVLQQPECQHISAEELYKKLIDLGEEIGLATVYRVLNQFDDAGIVTRHHFEGGKSVFELSTQHHHDHLVCLDCGEVIEFSDEVIEQRQREIAEQYNVQLTNHSLYLYGKCADGSCKQNPNAHKSKR.

A DNA-binding region spans residues 1–84 (MSDNNQALKD…GGKSVFELST (84 aa)). Positions 33 and 81 each coordinate Zn(2+). A dimerization region spans residues 85–142 (QHHHDHLVCLDCGEVIEFSDEVIEQRQREIAEQYNVQLTNHSLYLYGKCADGSCKQNP). H87 and D89 together coordinate Fe cation. H90, C93, C96, and E101 together coordinate Zn(2+). Fe cation is bound by residues E108 and H125.

It belongs to the Fur family. In terms of assembly, homodimer.

Its subcellular location is the cytoplasm. Fur acts as a repressor, employing Fe(2+) as a cofactor to bind the operator of the iron transport operon. It plays a role in the regulation of expression of the outer membrane protein fatA and synthesis of catechols which are intermediates in the biosynthesis of anguibactin. The polypeptide is Ferric uptake regulation protein (fur) (Vibrio anguillarum (strain ATCC 68554 / 775) (Listonella anguillarum)).